Consider the following 213-residue polypeptide: Orotate phosphoribosyltransferase (213 aa).

Lysine 26 contacts 5-phospho-alpha-D-ribose 1-diphosphate. Orotate is bound at residue 34-35 (FF). 5-phospho-alpha-D-ribose 1-diphosphate contacts are provided by residues 72 to 73 (YK), arginine 98, lysine 99, lysine 102, and 123 to 131 (DDVISAGTS). Orotate-binding residues include serine 127 and arginine 155.

The protein belongs to the purine/pyrimidine phosphoribosyltransferase family. PyrE subfamily. In terms of assembly, homodimer. Requires Mg(2+) as cofactor.

It carries out the reaction orotidine 5'-phosphate + diphosphate = orotate + 5-phospho-alpha-D-ribose 1-diphosphate. It participates in pyrimidine metabolism; UMP biosynthesis via de novo pathway; UMP from orotate: step 1/2. Functionally, catalyzes the transfer of a ribosyl phosphate group from 5-phosphoribose 1-diphosphate to orotate, leading to the formation of orotidine monophosphate (OMP). The protein is Orotate phosphoribosyltransferase of Neisseria gonorrhoeae (strain NCCP11945).